Consider the following 421-residue polypeptide: Exopolysaccharide production protein ExoF (421 aa).

The N-terminal stretch at 1–31 is a signal peptide; sequence MQSNRRSGKSAGSRMVSCFTRLALLAALAAS.

It is found in the periplasm. The protein operates within glycan metabolism; exopolysaccharide biosynthesis. Its function is as follows. Involved in succinoglycan (EPS I) synthesis. Needed for the addition of the first sugar (galactose) to the isoprenoid carrier. In Rhizobium meliloti (strain 1021) (Ensifer meliloti), this protein is Exopolysaccharide production protein ExoF (exoF).